A 108-amino-acid polypeptide reads, in one-letter code: Nucleoid-associated protein BH02310 (108 aa).

It belongs to the YbaB/EbfC family. In terms of assembly, homodimer.

The protein resides in the cytoplasm. It is found in the nucleoid. Its function is as follows. Binds to DNA and alters its conformation. May be involved in regulation of gene expression, nucleoid organization and DNA protection. The protein is Nucleoid-associated protein BH02310 of Bartonella henselae (strain ATCC 49882 / DSM 28221 / CCUG 30454 / Houston 1) (Rochalimaea henselae).